Consider the following 328-residue polypeptide: dITP/XTP pyrophosphatase (328 aa).

Positions 1 to 129 are unknown; it reads MSEKIYEYKD…ATSEQGFGDT (129 aa). The segment at 130–324 is NTP pyrophosphatase; the sequence is ILIATRNEGK…KLMEVFPAWQ (195 aa). A substrate-binding site is contributed by 134–139; sequence TRNEGK. The Proton acceptor role is filled by D196. A Mg(2+)-binding site is contributed by D196. Substrate is bound by residues S197, 280–283, K303, and 308–309; these read FGYD and HR.

It belongs to the HAM1 NTPase family. Homodimer. Mg(2+) serves as cofactor.

It catalyses the reaction XTP + H2O = XMP + diphosphate + H(+). It carries out the reaction dITP + H2O = dIMP + diphosphate + H(+). The enzyme catalyses ITP + H2O = IMP + diphosphate + H(+). Functionally, pyrophosphatase that catalyzes the hydrolysis of nucleoside triphosphates to their monophosphate derivatives, with a high preference for the non-canonical purine nucleotides XTP (xanthosine triphosphate), dITP (deoxyinosine triphosphate) and ITP. Seems to function as a house-cleaning enzyme that removes non-canonical purine nucleotides from the nucleotide pool, thus preventing their incorporation into DNA/RNA and avoiding chromosomal lesions. The chain is dITP/XTP pyrophosphatase from Streptococcus pyogenes serotype M18 (strain MGAS8232).